A 226-amino-acid polypeptide reads, in one-letter code: Late expression factor 7 (226 aa).

The 50-residue stretch at 9–58 (RAKRIRLPLEIIDTILQYLDPILHAKVVGLTTRVKCRLLRDNNVEDYLKL) folds into the F-box domain.

Interacts with host S-phase kinase-associated protein 1/SKP1.

The protein localises to the host nucleus. It functions in the pathway protein degradation; proteasomal ubiquitin-dependent pathway. F-box protein that manipulates the host DNA damage response (DRR) in order to promote viral multiplication. Acts as a substrate recognition component of SKP1/Cullin/F-box (SCF) complexes for targeted protein polyubiquitination. This is Late expression factor 7 (LEF-7) from Lepidoptera (butterflies and moths).